We begin with the raw amino-acid sequence, 1215 residues long: Metabotropic glycine receptor (1215 aa).

Positions 1-23 (MGAMAYPLLLCLLLAQLGLGAVG) are cleaved as a signal peptide. A disordered region spans residues 23-66 (GASRDPQGRPDSPRERTPKGKPHAQQPGRASASDSSAPWSRSTD). The Extracellular segment spans residues 24-417 (ASRDPQGRPD…CFVQEDKYLR (394 aa)). Residues 28-40 (PQGRPDSPRERTP) show a composition bias toward basic and acidic residues. The segment covering 52 to 64 (ASASDSSAPWSRS) has biased composition (low complexity). The tract at residues 85-281 (YLYTGDSHQL…CENGSYKPGW (197 aa)) is cache-like region. Asparagine 98 and asparagine 143 each carry an N-linked (GlcNAc...) asparagine glycan. The cysteines at positions 99 and 272 are disulfide-linked. Positions 172 and 173 each coordinate glycine. The N-linked (GlcNAc...) asparagine glycan is linked to asparagine 215. Glutamate 271 provides a ligand contact to glycine. Residue asparagine 274 is glycosylated (N-linked (GlcNAc...) asparagine). Aspartate 307 is a binding site for glycine. N-linked (GlcNAc...) asparagine glycosylation occurs at asparagine 333. A helical transmembrane segment spans residues 418-439 (LAIISFQALCMLLDFVSMLVVY). The Cytoplasmic portion of the chain corresponds to 440 to 451 (HFRKAKSIRASG). A helical membrane pass occupies residues 452-474 (LILLETILFGSLLLYFPVVILYF). The Extracellular portion of the chain corresponds to 475–478 (EPST). Residues 479–501 (FRCILLRWARLLGFATVYGTVTL) form a helical membrane-spanning segment. Cysteine 481 and cysteine 573 form a disulfide bridge. Residues 502–525 (KLHRVLKVFLSRTAQRIPYMTGGR) lie on the Cytoplasmic side of the membrane. The chain crosses the membrane as a helical span at residues 526–547 (VMRMLAVILLVVFWFLIGWTSS). Topologically, residues 548 to 576 (VCQNLEKQISLIGQGKTSDHLIFNMCLID) are extracellular. The helical transmembrane segment at 577 to 597 (RWDYMTAVAEFLFLLWGVYLC) threads the bilayer. Residues 598–611 (YAVRTVPSAFHEPR) are Cytoplasmic-facing. A helical transmembrane segment spans residues 612–633 (YMAVAVHNELIISAIFHTIRFV). At 634 to 642 (LASRLQSDW) the chain is on the extracellular side. The chain crosses the membrane as a helical span at residues 643–664 (MLMLYFAHTHLTVTVTIGLLLI). The Cytoplasmic segment spans residues 665-1215 (PKFSHSSNNP…KEEIWDSFKV (551 aa)). 3 positions are modified to phosphoserine: serine 694, serine 705, and serine 708. The disordered stretch occupies residues 757-999 (RITEIPETVS…LNPGTTQMKD (243 aa)). Composition is skewed to basic and acidic residues over residues 769–781 (CSKE…DHGT) and 819–828 (STYDHVRDQT). Residue lysine 774 forms a Glycyl lysine isopeptide (Lys-Gly) (interchain with G-Cter in ubiquitin) linkage. Phosphoserine is present on serine 865. Residues 925–943 (VEERTKSQKPLPKDKETNR) are compositionally biased toward basic and acidic residues. A Phosphoserine modification is found at serine 946. Over residues 979 to 998 (QRVNPTTANSDLNPGTTQMK) the composition is skewed to polar residues. Short sequence motifs (VCPWE motif) lie at residues 1006–1010 (VCPWE) and 1071–1075 (VCLWE). Serine 1080 is subject to Phosphoserine. The disordered stretch occupies residues 1117 to 1164 (SEELPPKAVASKTENENLNQIGHQEKKTSSSEENVRGSYNSSNNFQQP). Over residues 1139–1151 (HQEKKTSSSEENV) the composition is skewed to basic and acidic residues. Over residues 1153-1164 (GSYNSSNNFQQP) the composition is skewed to polar residues. Positions 1171-1175 (VCPWE) match the VCPWE motif 3 motif.

The protein belongs to the G-protein coupled receptor 3 family. Homodimer. Associates with the RGS7-GNB5 complex, promoting its localization to the cell membrane and regulating its GTPase activator activity. Interacts (via VCPWE motifs) with GNAO1. Interacts with GPC4. Interacts with EGFLAM.

It localises to the cell membrane. It is found in the postsynaptic cell membrane. Its subcellular location is the presynaptic cell membrane. The protein localises to the nucleus. Metabotropic receptor for glycine that controls synapse formation and function in the brain. Acts as an atypical G-protein coupled receptor that recruits and regulates the RGS7-GNB5 complex instead of activating G proteins. In absence of glycine ligand, promotes the GTPase activator activity of RGS7, increasing the GTPase activity of G protein alpha subunits, thereby driving them into their inactive GDP-bound form. Glycine-binding changes the conformation of the intracellular surface, inhibiting the GTPase activator activity of the RGS7-GNB5 complex, promoting G protein alpha subunits into their active GTP-bound form and regulating cAMP levels. Also able to bind taurine, a compound closely related to glycine, but with a two-fold lower affinity. Glycine receptor-dependent regulation of cAMP controls key ion channels, kinases and neurotrophic factors involved in neuronal excitability and synaptic transmission. Plays a pivotal role in regulating mood and cognition via its ability to regulate neuronal excitability in L2/L3 pyramidal neurons of the prefrontal cortex. Also involved in spatial learning by regulating hippocampal CA1 neuronal excitability. Acts as a synaptic organizer in the hippocampus, required for proper mossy fiber-CA3 neurocircuitry establishment, structure and function: induces presynaptic differentiation in contacting axons via its interaction with GPC4. In addition to glycine, may also act as a receptor for osteocalcin (BGLAP) hormone: osteocalcin-binding initiates a signaling response that prevents neuronal apoptosis in the hippocampus and regulates the synthesis of neurotransmitters. The protein is Metabotropic glycine receptor of Homo sapiens (Human).